Consider the following 282-residue polypeptide: NADPH-dependent 7-cyano-7-deazaguanine reductase (282 aa).

88–90 (IES) lines the substrate pocket. NADPH is bound at residue 90–91 (SK). Cys-190 serves as the catalytic Thioimide intermediate. The active-site Proton donor is Asp-197. Residue 229–230 (HE) participates in substrate binding. Residue 258 to 259 (RG) participates in NADPH binding.

It belongs to the GTP cyclohydrolase I family. QueF type 2 subfamily. Homodimer.

It is found in the cytoplasm. It carries out the reaction 7-aminomethyl-7-carbaguanine + 2 NADP(+) = 7-cyano-7-deazaguanine + 2 NADPH + 3 H(+). The protein operates within tRNA modification; tRNA-queuosine biosynthesis. Catalyzes the NADPH-dependent reduction of 7-cyano-7-deazaguanine (preQ0) to 7-aminomethyl-7-deazaguanine (preQ1). The sequence is that of NADPH-dependent 7-cyano-7-deazaguanine reductase from Escherichia coli O9:H4 (strain HS).